A 153-amino-acid polypeptide reads, in one-letter code: Small ribosomal subunit protein uS19 (153 aa).

Belongs to the universal ribosomal protein uS19 family.

This is Small ribosomal subunit protein uS19 (RPS15) from Elaeis oleifera (American oil palm).